A 213-amino-acid polypeptide reads, in one-letter code: Pyrrolidone-carboxylate peptidase (213 aa).

Catalysis depends on residues glutamate 78, cysteine 141, and histidine 165.

It belongs to the peptidase C15 family. As to quaternary structure, homotetramer.

Its subcellular location is the cytoplasm. The enzyme catalyses Release of an N-terminal pyroglutamyl group from a polypeptide, the second amino acid generally not being Pro.. Removes 5-oxoproline from various penultimate amino acid residues except L-proline. This chain is Pyrrolidone-carboxylate peptidase, found in Clostridium botulinum (strain Alaska E43 / Type E3).